The following is a 150-amino-acid chain: Large ribosomal subunit protein bL9 (150 aa).

The protein belongs to the bacterial ribosomal protein bL9 family.

Binds to the 23S rRNA. The polypeptide is Large ribosomal subunit protein bL9 (Buchnera aphidicola subsp. Acyrthosiphon pisum (strain 5A)).